Consider the following 291-residue polypeptide: Elongation factor Ts (291 aa).

The involved in Mg(2+) ion dislocation from EF-Tu stretch occupies residues 79–82 (TDFV).

This sequence belongs to the EF-Ts family.

The protein resides in the cytoplasm. Associates with the EF-Tu.GDP complex and induces the exchange of GDP to GTP. It remains bound to the aminoacyl-tRNA.EF-Tu.GTP complex up to the GTP hydrolysis stage on the ribosome. The sequence is that of Elongation factor Ts from Anaplasma marginale (strain Florida).